The sequence spans 203 residues: Glycerol-3-phosphate acyltransferase (203 aa).

A run of 6 helical transmembrane segments spans residues 3-23, 51-71, 74-94, 116-136, 140-160, and 164-178; these read ILLA…VVVS, KAAI…VWLV, FGIG…LGHL, AVHP…AFFF, SLAA…LFGT, and PVAW…LLIW.

Belongs to the PlsY family. In terms of assembly, probably interacts with PlsX.

Its subcellular location is the cell inner membrane. It carries out the reaction an acyl phosphate + sn-glycerol 3-phosphate = a 1-acyl-sn-glycero-3-phosphate + phosphate. Its pathway is lipid metabolism; phospholipid metabolism. Catalyzes the transfer of an acyl group from acyl-phosphate (acyl-PO(4)) to glycerol-3-phosphate (G3P) to form lysophosphatidic acid (LPA). This enzyme utilizes acyl-phosphate as fatty acyl donor, but not acyl-CoA or acyl-ACP. The chain is Glycerol-3-phosphate acyltransferase from Burkholderia pseudomallei (strain 1710b).